Reading from the N-terminus, the 1323-residue chain is Glutamate receptor ionotropic, NMDA 2D (1323 aa).

A signal peptide spans methionine 1–proline 27. Residues phenylalanine 28–serine 579 lie on the Extracellular side of the membrane. N-linked (GlcNAc...) asparagine glycosylation occurs at asparagine 89. The cysteines at positions 101 and 345 are disulfide-linked. Asparagine 349, asparagine 363, asparagine 381, and asparagine 464 each carry an N-linked (GlcNAc...) asparagine glycan. Cystine bridges form between cysteine 452–cysteine 480 and cysteine 459–cysteine 481. Residues serine 536, threonine 538, and arginine 543 each contribute to the L-glutamate site. Asparagine 566 carries N-linked (GlcNAc...) asparagine glycosylation. The chain crosses the membrane as a helical span at residues proline 580–phenylalanine 601. Residues glutamate 602–isoleucine 626 lie on the Cytoplasmic side of the membrane. An intramembrane region (discontinuously helical) is located at residues glycine 627 to phenylalanine 638. Positions lysine 628 to proline 647 are pore-forming. Topologically, residues asparagine 639–threonine 650 are cytoplasmic. The chain crosses the membrane as a helical span at residues threonine 651–threonine 671. The Extracellular segment spans residues alanine 672–aspartate 840. A glycan (N-linked (GlcNAc...) asparagine) is linked at asparagine 712. Residues serine 714, threonine 715, and aspartate 756 each contribute to the L-glutamate site. A disulfide bridge links cysteine 770 with cysteine 825. The chain crosses the membrane as a helical span at residues asparagine 841–histidine 864. The Cytoplasmic portion of the chain corresponds to leucine 865 to valine 1323. Disordered stretches follow at residues glutamate 897 to alanine 952, alanine 977 to glycine 1112, and proline 1201 to valine 1323. Over residues alanine 899–phenylalanine 929 the composition is skewed to pro residues. Residues proline 931 to tryptophan 940 are compositionally biased toward basic and acidic residues. The segment covering alanine 977 to proline 986 has biased composition (low complexity). Positions leucine 987–serine 1001 are enriched in pro residues. Residues alanine 1030–proline 1039 are compositionally biased toward low complexity. The span at threonine 1080–cysteine 1092 shows a compositional bias: pro residues. Residues proline 1208–histidine 1228 are compositionally biased toward basic residues. Arginine 1303 is subject to Omega-N-methylarginine. A Phosphoserine modification is found at serine 1313. The PDZ-binding signature appears at serine 1321–valine 1323.

The protein belongs to the glutamate-gated ion channel (TC 1.A.10.1) family. NR2D/GRIN2D subfamily. In terms of assembly, heterotetramer. Forms heterotetrameric channels composed of two GluN1/zeta subunits (GRIN1), and two identical GluN2/epsilon subunits (GRIN2A, GRIN2B, GRIN2C or GRIN2D) or GluN3 subunits (GRIN3A or GRIN3B) (in vitro). In vivo, the subunit composition may depend on the expression levels of the different subunits. Interacts with PDZ domains of PATJ and DLG4. As to expression, expressed in brain, mainly in the subcortical region.

It localises to the cell membrane. It is found in the postsynaptic cell membrane. The enzyme catalyses Ca(2+)(in) = Ca(2+)(out). It catalyses the reaction Na(+)(in) = Na(+)(out). It carries out the reaction K(+)(in) = K(+)(out). Component of N-methyl-D-aspartate (NMDA) receptors (NMDARs) that function as heterotetrameric, ligand-gated cation channels with high calcium permeability and voltage-dependent block by Mg(2+). Participates in synaptic plasticity for learning and memory formation. Channel activation requires binding of the neurotransmitter L-glutamate to the GluN2 subunit, glycine or D-serine binding to the GluN1 subunit, plus membrane depolarization to eliminate channel inhibition by Mg(2+). NMDARs mediate simultaneously the potasium efflux and the influx of calcium and sodium. Each GluN2 subunit confers differential attributes to channel properties, including activation, deactivation and desensitization kinetics, pH sensitivity, Ca2(+) permeability, and binding to allosteric modulators. The protein is Glutamate receptor ionotropic, NMDA 2D of Rattus norvegicus (Rat).